The following is a 70-amino-acid chain: NAD(P)H-quinone oxidoreductase subunit O (70 aa).

It belongs to the complex I NdhO subunit family. In terms of assembly, NDH-1 can be composed of about 15 different subunits; different subcomplexes with different compositions have been identified which probably have different functions.

It localises to the cellular thylakoid membrane. The catalysed reaction is a plastoquinone + NADH + (n+1) H(+)(in) = a plastoquinol + NAD(+) + n H(+)(out). It catalyses the reaction a plastoquinone + NADPH + (n+1) H(+)(in) = a plastoquinol + NADP(+) + n H(+)(out). Functionally, NDH-1 shuttles electrons from an unknown electron donor, via FMN and iron-sulfur (Fe-S) centers, to quinones in the respiratory and/or the photosynthetic chain. The immediate electron acceptor for the enzyme in this species is believed to be plastoquinone. Couples the redox reaction to proton translocation, and thus conserves the redox energy in a proton gradient. Cyanobacterial NDH-1 also plays a role in inorganic carbon-concentration. This Trichormus variabilis (strain ATCC 29413 / PCC 7937) (Anabaena variabilis) protein is NAD(P)H-quinone oxidoreductase subunit O.